An 878-amino-acid polypeptide reads, in one-letter code: NUT family member 2A (878 aa).

4 disordered regions span residues 273–324 (WSQG…DDSC), 417–566 (QKSQ…LSYT), 627–757 (KEKQ…EEEE), and 775–878 (WLPQ…RCSQ). Pro residues-rich tracts occupy residues 278–288 (PLPPPPPPAAQ) and 427–444 (CLPP…PPAP). Over residues 476–487 (TKARRPPPRPHR) the composition is skewed to basic residues. The span at 537 to 551 (EPEKQREEGEVKQPQ) shows a compositional bias: basic and acidic residues.

It belongs to the NUT family.

The protein is NUT family member 2A (NUTM2A) of Homo sapiens (Human).